Reading from the N-terminus, the 227-residue chain is Translation initiation factor 6 (227 aa).

Belongs to the eIF-6 family.

In terms of biological role, binds to the 50S ribosomal subunit and prevents its association with the 30S ribosomal subunit to form the 70S initiation complex. This chain is Translation initiation factor 6, found in Staphylothermus marinus (strain ATCC 43588 / DSM 3639 / JCM 9404 / F1).